The chain runs to 146 residues: Hemoglobin subunit beta (146 aa).

A Globin domain is found at Q2–H146. Residues H63 and H92 each contribute to the heme b site.

The protein belongs to the globin family. Heterotetramer of two alpha chains and two beta chains. In terms of tissue distribution, red blood cells.

Functionally, involved in oxygen transport from the lung to the various peripheral tissues. The sequence is that of Hemoglobin subunit beta (HBB) from Rhea americana (Greater rhea).